Reading from the N-terminus, the 542-residue chain is Apolipoprotein N-acyltransferase (542 aa).

Transmembrane regions (helical) follow at residues 26–46, 54–74, 89–109, 113–133, 163–183, and 187–207; these read ASVI…LSLV, IWCL…SWML, LLIS…VLCF, YWGA…VRYY, WAGQ…VLVF, and FSYG…GTYY. The 280-residue stretch at 220 to 499 folds into the CN hydrolase domain; it reads LRVAIVQPGY…PDVLQVSVPV (280 aa). The active-site Proton acceptor is the Glu264. The active site involves Lys349. Residue Cys404 is the Nucleophile of the active site. Residues 509–529 form a helical membrane-spanning segment; it reads FGDAPLLFVAVSSVLGVVGYF.

The protein belongs to the CN hydrolase family. Apolipoprotein N-acyltransferase subfamily.

Its subcellular location is the cell inner membrane. It carries out the reaction N-terminal S-1,2-diacyl-sn-glyceryl-L-cysteinyl-[lipoprotein] + a glycerophospholipid = N-acyl-S-1,2-diacyl-sn-glyceryl-L-cysteinyl-[lipoprotein] + a 2-acyl-sn-glycero-3-phospholipid + H(+). Its pathway is protein modification; lipoprotein biosynthesis (N-acyl transfer). In terms of biological role, catalyzes the phospholipid dependent N-acylation of the N-terminal cysteine of apolipoprotein, the last step in lipoprotein maturation. The sequence is that of Apolipoprotein N-acyltransferase from Chlamydia muridarum (strain MoPn / Nigg).